The primary structure comprises 620 residues: Glutathione-regulated potassium-efflux system protein KefC (620 aa).

Residues 1–3 (MDS) lie on the Periplasmic side of the membrane. The helical transmembrane segment at 4–24 (HTLLQALIYLGSAALIVPIAV) threads the bilayer. R25 is a topological domain (cytoplasmic). The helical transmembrane segment at 26-46 (LGLGSVLGYLIAGCIIGPWGL) threads the bilayer. Residues 47 to 53 (RLVTDAE) are Periplasmic-facing. A helical membrane pass occupies residues 54–74 (SILHFAEIGVVLMLFVIGLEL). The Cytoplasmic segment spans residues 75 to 89 (DPQRLWKLRASVFGG). Residues 90-110 (GALQMGVCGGLIGLFCMFLGL) form a helical membrane-spanning segment. The Periplasmic portion of the chain corresponds to 111–113 (RWQ). The chain crosses the membrane as a helical span at residues 114–134 (VAELIGMTLALSSTAIAMQAM). The Cytoplasmic segment spans residues 135-148 (NERNLTVSQVGRSA). The chain crosses the membrane as a helical span at residues 149 to 169 (FAVLLFQDIAAIPLVAMIPLL). Topologically, residues 170–177 (AASGASTT) are periplasmic. The chain crosses the membrane as a helical span at residues 178–198 (LGAFALSALKVAGALALVVLL). Topologically, residues 199–213 (GRYVTRPALRFVARS) are cytoplasmic. The helical transmembrane segment at 214–233 (GLREVFSAVALFLVFGFGLL) threads the bilayer. At 234-236 (LEE) the chain is on the periplasmic side. A helical membrane pass occupies residues 237–254 (VGLSMAMGAFLAGVLLAS). The Cytoplasmic portion of the chain corresponds to 255-269 (SEYRHALESDIEPFK). The chain crosses the membrane as a helical span at residues 270–290 (GLLLGLFFIGVGMSIDFGTLV). Residues 291-293 (ENP) are Periplasmic-facing. Residues 294–314 (LRILLLLAGFLAIKIVMLWLV) form a helical membrane-spanning segment. Topologically, residues 315 to 326 (ARPLGVPAKQRR) are cytoplasmic. A helical transmembrane segment spans residues 327–347 (WFAVLLGQGSEFAFVVFGAAQ). Residues 348 to 358 (MADVLEPEWAK) lie on the Periplasmic side of the membrane. Residues 359–379 (ALTLAVALSMAATPIFLVLLT) form a helical membrane-spanning segment. Residues 380–620 (RMEKTATGEA…ADEPEVKPSI (241 aa)) lie on the Cytoplasmic side of the membrane. Residues 399–518 (QPRVIVAGFG…AGVAMPERET (120 aa)) enclose the RCK N-terminal domain. Residues 599–620 (QGTAEGKHSGEVADEPEVKPSI) form a disordered region.

The protein belongs to the monovalent cation:proton antiporter 2 (CPA2) transporter (TC 2.A.37) family. KefC subfamily. As to quaternary structure, homodimer. Interacts with the regulatory subunit KefF.

Its subcellular location is the cell inner membrane. Pore-forming subunit of a potassium efflux system that confers protection against electrophiles. Catalyzes K(+)/H(+) antiport. The sequence is that of Glutathione-regulated potassium-efflux system protein KefC from Salmonella typhimurium (strain LT2 / SGSC1412 / ATCC 700720).